The sequence spans 375 residues: Queuine tRNA-ribosyltransferase (375 aa).

Catalysis depends on aspartate 89, which acts as the Proton acceptor. Residues 89–93, aspartate 143, glutamine 187, and glycine 214 each bind substrate; that span reads DSGGF. The tract at residues 245–251 is RNA binding; that stretch reads GVGKPED. Aspartate 264 acts as the Nucleophile in catalysis. The tract at residues 269–273 is RNA binding; important for wobble base 34 recognition; that stretch reads TRNAR. Positions 302, 304, 307, and 333 each coordinate Zn(2+).

This sequence belongs to the queuine tRNA-ribosyltransferase family. As to quaternary structure, homodimer. Within each dimer, one monomer is responsible for RNA recognition and catalysis, while the other monomer binds to the replacement base PreQ1. The cofactor is Zn(2+).

It catalyses the reaction 7-aminomethyl-7-carbaguanine + guanosine(34) in tRNA = 7-aminomethyl-7-carbaguanosine(34) in tRNA + guanine. It participates in tRNA modification; tRNA-queuosine biosynthesis. Catalyzes the base-exchange of a guanine (G) residue with the queuine precursor 7-aminomethyl-7-deazaguanine (PreQ1) at position 34 (anticodon wobble position) in tRNAs with GU(N) anticodons (tRNA-Asp, -Asn, -His and -Tyr). Catalysis occurs through a double-displacement mechanism. The nucleophile active site attacks the C1' of nucleotide 34 to detach the guanine base from the RNA, forming a covalent enzyme-RNA intermediate. The proton acceptor active site deprotonates the incoming PreQ1, allowing a nucleophilic attack on the C1' of the ribose to form the product. After dissociation, two additional enzymatic reactions on the tRNA convert PreQ1 to queuine (Q), resulting in the hypermodified nucleoside queuosine (7-(((4,5-cis-dihydroxy-2-cyclopenten-1-yl)amino)methyl)-7-deazaguanosine). The protein is Queuine tRNA-ribosyltransferase of Salmonella agona (strain SL483).